Here is a 119-residue protein sequence, read N- to C-terminus: Large ribosomal subunit protein uL18 (119 aa).

It belongs to the universal ribosomal protein uL18 family. Part of the 50S ribosomal subunit; part of the 5S rRNA/L5/L18/L25 subcomplex. Contacts the 5S and 23S rRNAs.

This is one of the proteins that bind and probably mediate the attachment of the 5S RNA into the large ribosomal subunit, where it forms part of the central protuberance. The chain is Large ribosomal subunit protein uL18 from Clostridium botulinum (strain Loch Maree / Type A3).